Consider the following 182-residue polypeptide: Adenine phosphoribosyltransferase (182 aa).

This sequence belongs to the purine/pyrimidine phosphoribosyltransferase family. Homodimer.

Its subcellular location is the cytoplasm. It carries out the reaction AMP + diphosphate = 5-phospho-alpha-D-ribose 1-diphosphate + adenine. Its pathway is purine metabolism; AMP biosynthesis via salvage pathway; AMP from adenine: step 1/1. Functionally, catalyzes a salvage reaction resulting in the formation of AMP, that is energically less costly than de novo synthesis. In Koribacter versatilis (strain Ellin345), this protein is Adenine phosphoribosyltransferase.